The chain runs to 679 residues: Altered inheritance of mitochondria protein 21 (679 aa).

Positions 1–95 (MPSEVTPKVP…EELNNVMNNT (95 aa)) are disordered. Over residues 9 to 19 (VPERPSRRKTS) the composition is skewed to basic and acidic residues. A Phosphothreonine modification is found at Thr-18. Residue Ser-36 is modified to Phosphoserine. Position 58 is a phosphothreonine (Thr-58). Ser-70 carries the phosphoserine modification. Thr-85 bears the Phosphothreonine mark. Positions 86 to 95 (EELNNVMNNT) are enriched in polar residues. A Phosphoserine modification is found at Ser-104. Disordered stretches follow at residues 107-522 (SKHN…EKIE) and 548-679 (LMDT…FHSL). Over residues 109 to 119 (HNIHSVSRKKS) the composition is skewed to basic residues. Polar residues-rich tracts occupy residues 133–149 (QNGQ…TNPS) and 164–178 (SAIS…SNNE). The segment covering 179 to 213 (VTEHSDSEDLTEKQKVHAALDNEAGDGSHFEEKLI) has biased composition (basic and acidic residues). Phosphoserine occurs at positions 183, 206, and 231. The span at 243-272 (SDDKAEKFTKHPESSLEELQKHQEQQEEKI) shows a compositional bias: basic and acidic residues. Thr-277 carries the phosphothreonine modification. Residue Ser-284 is modified to Phosphoserine. Positions 296–323 (EVNSQPQGPSDTETVIAATSSNVPSQIA) are enriched in polar residues. Position 324 is a phosphoserine (Ser-324). Basic and acidic residues-rich tracts occupy residues 339–351 (KKDF…KEEL) and 372–383 (EESKIPKIPSER). An interaction with SH3 domain of ABP1 region spans residues 383–396 (RPKRRAPPPVPKKP). Polar residues-rich tracts occupy residues 414 to 427 (DLHN…TTAS) and 437 to 452 (SSIT…TSKL). Over residues 471–482 (LEKKLSSPDTES) the composition is skewed to basic and acidic residues. Polar residues predominate over residues 483 to 492 (KLGTQDQSQA). The span at 501–512 (RRGRGPRGRKLP) shows a compositional bias: basic residues. Position 552 is a phosphothreonine (Thr-552). A compositionally biased stretch (basic and acidic residues) spans 556 to 576 (QAERALDEKSKSIPEEQREQS). Ser-576 is modified (phosphoserine). Over residues 603–613 (PLSQLPQTNAV) the composition is skewed to polar residues. Phosphoserine is present on residues Ser-620, Ser-623, Ser-625, Ser-627, Ser-667, Ser-671, Ser-675, and Ser-678. Residues 667–679 (SALHSEEASFHSL) show a composition bias toward basic and acidic residues.

This sequence belongs to the AIM21 family. In terms of assembly, interacts with ribosomes. Interacts with ABP1.

It localises to the cytoplasm. Its subcellular location is the cytoskeleton. The protein localises to the actin patch. Functionally, involved in mitochondrial migration along actin filaments. In Saccharomyces cerevisiae (strain YJM789) (Baker's yeast), this protein is Altered inheritance of mitochondria protein 21 (AIM21).